A 411-amino-acid polypeptide reads, in one-letter code: Putative nickel insertion protein (411 aa).

The protein belongs to the LarC family.

The polypeptide is Putative nickel insertion protein (Acaryochloris marina (strain MBIC 11017)).